Consider the following 133-residue polypeptide: Small ribosomal subunit protein uS11 (133 aa).

The protein belongs to the universal ribosomal protein uS11 family. Part of the 30S ribosomal subunit.

Located on the platform of the 30S subunit. The chain is Small ribosomal subunit protein uS11 from Pyrobaculum aerophilum (strain ATCC 51768 / DSM 7523 / JCM 9630 / CIP 104966 / NBRC 100827 / IM2).